Reading from the N-terminus, the 447-residue chain is Signal recognition particle 54 kDa protein (447 aa).

GTP contacts are provided by residues 103 to 110 (GVQGSGKT), 185 to 189 (DTAGR), and 245 to 248 (TKMD).

This sequence belongs to the GTP-binding SRP family. SRP54 subfamily. Part of the signal recognition particle protein translocation system, which is composed of SRP and FtsY. Archaeal SRP consists of a 7S RNA molecule of 300 nucleotides and two protein subunits: SRP54 and SRP19.

The protein localises to the cytoplasm. The enzyme catalyses GTP + H2O = GDP + phosphate + H(+). Involved in targeting and insertion of nascent membrane proteins into the cytoplasmic membrane. Binds to the hydrophobic signal sequence of the ribosome-nascent chain (RNC) as it emerges from the ribosomes. The SRP-RNC complex is then targeted to the cytoplasmic membrane where it interacts with the SRP receptor FtsY. The sequence is that of Signal recognition particle 54 kDa protein from Saccharolobus islandicus (strain M.16.27) (Sulfolobus islandicus).